Consider the following 342-residue polypeptide: Holliday junction branch migration complex subunit RuvB (342 aa).

The tract at residues 1–179 (MTNILSPEKS…FGIPMRLNFY (179 aa)) is large ATPase domain (RuvB-L). ATP is bound by residues Ile-18, Arg-19, Gly-60, Lys-63, Thr-64, Thr-65, 126–128 (EDF), Arg-169, Tyr-179, and Arg-216. Thr-64 contributes to the Mg(2+) binding site. Residues 180–250 (NTGELKKVLN…ISDFGLNRLE (71 aa)) form a small ATPAse domain (RuvB-S) region. Residues 253–342 (RIGLDSNDYR…HQFNIFNENE (90 aa)) are head domain (RuvB-H). The DNA site is built by Arg-289, Arg-308, and Arg-313.

The protein belongs to the RuvB family. As to quaternary structure, homohexamer. Forms an RuvA(8)-RuvB(12)-Holliday junction (HJ) complex. HJ DNA is sandwiched between 2 RuvA tetramers; dsDNA enters through RuvA and exits via RuvB. An RuvB hexamer assembles on each DNA strand where it exits the tetramer. Each RuvB hexamer is contacted by two RuvA subunits (via domain III) on 2 adjacent RuvB subunits; this complex drives branch migration. In the full resolvosome a probable DNA-RuvA(4)-RuvB(12)-RuvC(2) complex forms which resolves the HJ.

The protein localises to the cytoplasm. The catalysed reaction is ATP + H2O = ADP + phosphate + H(+). In terms of biological role, the RuvA-RuvB-RuvC complex processes Holliday junction (HJ) DNA during genetic recombination and DNA repair, while the RuvA-RuvB complex plays an important role in the rescue of blocked DNA replication forks via replication fork reversal (RFR). RuvA specifically binds to HJ cruciform DNA, conferring on it an open structure. The RuvB hexamer acts as an ATP-dependent pump, pulling dsDNA into and through the RuvAB complex. RuvB forms 2 homohexamers on either side of HJ DNA bound by 1 or 2 RuvA tetramers; 4 subunits per hexamer contact DNA at a time. Coordinated motions by a converter formed by DNA-disengaged RuvB subunits stimulates ATP hydrolysis and nucleotide exchange. Immobilization of the converter enables RuvB to convert the ATP-contained energy into a lever motion, pulling 2 nucleotides of DNA out of the RuvA tetramer per ATP hydrolyzed, thus driving DNA branch migration. The RuvB motors rotate together with the DNA substrate, which together with the progressing nucleotide cycle form the mechanistic basis for DNA recombination by continuous HJ branch migration. Branch migration allows RuvC to scan DNA until it finds its consensus sequence, where it cleaves and resolves cruciform DNA. The polypeptide is Holliday junction branch migration complex subunit RuvB (Rickettsia conorii (strain ATCC VR-613 / Malish 7)).